A 604-amino-acid chain; its full sequence is Structure-specific endonuclease subunit MUS81 (604 aa).

Disordered stretches follow at residues 93-138, 227-248, and 253-272; these read AAVH…REYV, KLDSEETGTRHEDVDSQDGQNV, and LEEEDEDEEKESWSSERPAV. 2 stretches are compositionally biased toward basic and acidic residues: residues 116 to 128 and 227 to 240; these read EHTKLTQKEVRKE and KLDSEETGTRHEDV. The winged helix domain (WHD); critical for endonuclease activity stretch occupies residues 138–254; the sequence is VPQKRSGGYA…GQNVVDLTLE (117 aa). The span at 253–262 shows a compositional bias: acidic residues; sequence LEEEDEDEEK. Residues 314–423 enclose the ERCC4 domain; sequence VLCVDLCETT…KPIYLVEECG (110 aa). Catalysis depends on residues Asp318, Glu321, and Asp353. Residues Asp318, Glu321, Asp353, Glu384, and Arg385 each contribute to the Mg(2+) site. Residues 524 to 598 form a helix-hairpin-helix (2HhH); involved in DNA recognition and bending region; it reads VREVFARQLM…LSRTIYQLYC (75 aa).

Belongs to the XPF family. As to quaternary structure, part of the heterodimeric DNA structure-specific endonuclease complex MUS81-EME1. Part of the heterodimeric DNA structure-specific endonuclease complex MUS81-EME2. The cofactor is Mg(2+).

The protein resides in the nucleus. It localises to the nucleolus. Functionally, catalytic subunit of two functionally distinct, structure-specific, heterodimeric DNA endonucleases MUS81-EME1 and MUS81-EME2 that are involved in the maintenance of genome stability. Both endonucleases have essentially the same substrate specificity though MUS81-EME2 is more active than its MUS81-EME1 counterpart. Both cleave 3'-flaps and nicked Holliday junctions, and exhibit limited endonuclease activity with 5' flaps and nicked double-stranded DNAs. MUS81-EME2 which is active during the replication of DNA is more specifically involved in replication fork processing. Replication forks frequently encounter obstacles to their passage, including DNA base lesions, DNA interstrand cross-links, difficult-to-replicate sequences, transcription bubbles, or tightly bound proteins. One mechanism for the restart of a stalled replication fork involves nucleolytic cleavage mediated by the MUS81-EME2 endonuclease. By acting upon the stalled fork, MUS81-EME2 generates a DNA double-strand break (DSB) that can be repaired by homologous recombination, leading to the restoration of an active fork. MUS81-EME2 could also function in telomere maintenance. MUS81-EME1, on the other hand, is active later in the cell cycle and functions in the resolution of mitotic recombination intermediates including the Holliday junctions, the four-way DNA intermediates that form during homologous recombination. This chain is Structure-specific endonuclease subunit MUS81 (mus81), found in Danio rerio (Zebrafish).